Here is a 252-residue protein sequence, read N- to C-terminus: Secreted LysM effector LysM1 (252 aa).

Residues 20 to 64 enclose the LysM 1 domain; sequence FAIPGDPGDTCDTLSDRWGITIDIFKSLNPGVNCPNLVANMEYCV. The disordered stretch occupies residues 71 to 98; the sequence is DTPSTTTTAKPTMTPTSTPTKTTTTSTA. Residues 72–98 show a composition bias toward low complexity; sequence TPSTTTTAKPTMTPTSTPTKTTTTSTA. 2 LysM domains span residues 126–172 and 204–250; these read KFHL…YVCV and KFHL…YVCI.

It belongs to the secreted LysM effector family.

It localises to the secreted. Its subcellular location is the cell wall. Functionally, secreted effector that binds two substrates, chitin and N-linked oligosaccharides associated with human skin glycoproteins. Could provide the pathogen with three important functions including shielding host cell wall chitin from the human immune system, shielding the pathogen's glycoproteins from host degradation and immune surveillance, and helping facilitate pathogen adhesion to human skin. This is Secreted LysM effector LysM1 from Trichophyton rubrum (strain ATCC MYA-4607 / CBS 118892) (Athlete's foot fungus).